Here is a 382-residue protein sequence, read N- to C-terminus: ORC1-type DNA replication protein 1 (382 aa).

ATP is bound by residues 63-67 (TGKTA), tyrosine 205, and arginine 217.

This sequence belongs to the CDC6/cdc18 family. In terms of assembly, monomer. Interacts with MCM via the WH domain. Autophosphorylated on a serine. Phosphorylation is stimulated by binding to MCM. Both single-stranded DNA and double-stranded DNA inhibit the phosphorylation reaction.

Its function is as follows. Involved in regulation of DNA replication. May play an essential role in origin recognition. Binds to DNA, with a preference for origin-specific double-stranded sequences. Does not bind single-stranded DNA. Inhibits MCM helicase activity but does not affect its oligomeric state. In Methanothermobacter thermautotrophicus (strain ATCC 29096 / DSM 1053 / JCM 10044 / NBRC 100330 / Delta H) (Methanobacterium thermoautotrophicum), this protein is ORC1-type DNA replication protein 1 (cdc6-1).